Reading from the N-terminus, the 606-residue chain is Sulfite reductase [NADPH] flavoprotein alpha-component (606 aa).

The Flavodoxin-like domain maps to 64 to 202 (VTLISASQTG…QAQQWRQQVV (139 aa)). Residues 70–75 (SQTGNA), 117–120 (STQG), and 153–162 (LGDTSYEHFC) contribute to the FMN site. The segment covering 212–234 (QSTAPTQSTTPAAAAITSGGTTT) has biased composition (low complexity). The tract at residues 212–235 (QSTAPTQSTTPAAAAITSGGTTTV) is disordered. Residues 241 to 455 (TAPLTAQLSV…IEHNDNFRLP (215 aa)) enclose the FAD-binding FR-type domain. FAD contacts are provided by residues threonine 329, lysine 363, 393-396 (RLYS), 411-413 (TVG), tyrosine 417, and 426-429 (GGAS). NADP(+) is bound by residues 526–527 (SR), 532–536 (KIYVQ), and aspartate 568. An FAD-binding site is contributed by tyrosine 606.

Belongs to the NADPH-dependent sulphite reductase flavoprotein subunit CysJ family. It in the N-terminal section; belongs to the flavodoxin family. The protein in the C-terminal section; belongs to the flavoprotein pyridine nucleotide cytochrome reductase family. As to quaternary structure, alpha(8)-beta(8). The alpha component is a flavoprotein, the beta component is a hemoprotein. FAD is required as a cofactor. It depends on FMN as a cofactor.

The catalysed reaction is hydrogen sulfide + 3 NADP(+) + 3 H2O = sulfite + 3 NADPH + 4 H(+). It participates in sulfur metabolism; hydrogen sulfide biosynthesis; hydrogen sulfide from sulfite (NADPH route): step 1/1. Component of the sulfite reductase complex that catalyzes the 6-electron reduction of sulfite to sulfide. This is one of several activities required for the biosynthesis of L-cysteine from sulfate. The flavoprotein component catalyzes the electron flow from NADPH -&gt; FAD -&gt; FMN to the hemoprotein component. In Yersinia pestis bv. Antiqua (strain Antiqua), this protein is Sulfite reductase [NADPH] flavoprotein alpha-component.